A 566-amino-acid polypeptide reads, in one-letter code: Good for full DBP5 activity protein 2 (566 aa).

Polar residues predominate over residues 1 to 16; that stretch reads MQVQKMVRDNSNNGSD. Positions 1–41 are disordered; it reads MQVQKMVRDNSNNGSDKSVHWERRNNNGAGPRYRSRSGNTG.

High-copy suppressor of DBP5 mutation. The sequence is that of Good for full DBP5 activity protein 2 (GFD2) from Saccharomyces cerevisiae (strain ATCC 204508 / S288c) (Baker's yeast).